A 283-amino-acid polypeptide reads, in one-letter code: Elongation factor Ts (283 aa).

The segment at 79-82 (TDFV) is involved in Mg(2+) ion dislocation from EF-Tu.

This sequence belongs to the EF-Ts family.

The protein localises to the cytoplasm. Associates with the EF-Tu.GDP complex and induces the exchange of GDP to GTP. It remains bound to the aminoacyl-tRNA.EF-Tu.GTP complex up to the GTP hydrolysis stage on the ribosome. The sequence is that of Elongation factor Ts from Shewanella sp. (strain ANA-3).